We begin with the raw amino-acid sequence, 1187 residues long: Phospholipid-transporting ATPase IH (1187 aa).

Residues 1 to 61 (MDCSLLRTLV…SSKYTFWNFI (61 aa)) lie on the Cytoplasmic side of the membrane. A helical transmembrane segment spans residues 62–82 (PKNLFEQFRRIANFYFLIIFL). Residues 83-88 (VQLIID) are Extracellular-facing. The helical transmembrane segment at 89–110 (TPTSPVTSGLPLFFVITVTAIK) threads the bilayer. The Cytoplasmic segment spans residues 111 to 296 (QGYEDWLRHK…SAVEKSMNTF (186 aa)). Residues 297-318 (LIVYLCILVSKALINTVLKYVW) form a helical membrane-spanning segment. Residues 319 to 349 (QSEPFRDEPWYNEKTESERQRNLFLRAFTDF) are Extracellular-facing. A helical membrane pass occupies residues 350 to 372 (LAFMVLFNYIIPVSMYVTVEMQK). At 373 to 884 (FLGSYFITWD…GHFYYIRISE (512 aa)) the chain is on the cytoplasmic side. Residue Asp-414 is the 4-aspartylphosphate intermediate of the active site. ATP-binding residues include Asp-414, Lys-415, Thr-416, Glu-513, Phe-555, Lys-578, Arg-609, Thr-689, Gly-690, and Asp-691. Position 414 (Asp-414) interacts with Mg(2+). Thr-416 contributes to the Mg(2+) binding site. Ser-740 is subject to Phosphoserine. Arg-801 and Lys-807 together coordinate ATP. Residue Asp-828 participates in Mg(2+) binding. Asn-831 and Asp-832 together coordinate ATP. Asp-832 is a binding site for Mg(2+). Residues 885–905 (LVQYFFYKNVCFIFPQFLYQF) traverse the membrane as a helical segment. Residues 906–917 (FCGFSQQTLYDT) lie on the Extracellular side of the membrane. Residues 918-937 (AYLTLYNISFTSLPILLYSL) form a helical membrane-spanning segment. Residues 938 to 967 (MEQHVGIDVLKRDPTLYRDIAKNALLRWRV) lie on the Cytoplasmic side of the membrane. Residues 968–989 (FIYWTFLGVFDALVFFFGAYFI) traverse the membrane as a helical segment. At 990–1003 (FENTTVTINGQMFG) the chain is on the extracellular side. Residues 1004-1026 (NWTFGTLVFTVMVLTVTLKLALD) form a helical membrane-spanning segment. Residues 1027-1032 (THYWTW) are Cytoplasmic-facing. Residues 1033 to 1053 (INHFVIWGSLLFYIAFSLLWG) traverse the membrane as a helical segment. Residues 1054 to 1071 (GVIWPFLSYQRMYYVFIS) are Extracellular-facing. Residues 1072–1096 (MLSSGPAWLGIILLVTVGLLPDVLK) traverse the membrane as a helical segment. The Cytoplasmic portion of the chain corresponds to 1097–1138 (KVLCRQLWPTATERTQNIQHQDSISEFTPLASLPSWGAQGSR). Ser-1148 and Ser-1158 each carry phosphoserine.

This sequence belongs to the cation transport ATPase (P-type) (TC 3.A.3) family. Type IV subfamily. As to quaternary structure, component of a P4-ATPase flippase complex which consists of a catalytic alpha subunit ATP11A and an accessory beta subunit TMEM30A. The cofactor is Mg(2+). In terms of processing, proteolytically cleaved by CASP3. As to expression, widely expressed. Expressed in myoblasts. Expressed in retina, brain, liver, testes and kidney (at protein level). Expressed in the inner ear.

The protein resides in the cell membrane. It is found in the early endosome. The protein localises to the recycling endosome. It localises to the endoplasmic reticulum membrane. The enzyme catalyses ATP + H2O + phospholipidSide 1 = ADP + phosphate + phospholipidSide 2.. It carries out the reaction a 1,2-diacyl-sn-glycero-3-phospho-L-serine(out) + ATP + H2O = a 1,2-diacyl-sn-glycero-3-phospho-L-serine(in) + ADP + phosphate + H(+). The catalysed reaction is a 1,2-diacyl-sn-glycero-3-phosphoethanolamine(out) + ATP + H2O = a 1,2-diacyl-sn-glycero-3-phosphoethanolamine(in) + ADP + phosphate + H(+). Its function is as follows. Catalytic component of a P4-ATPase flippase complex which catalyzes the hydrolysis of ATP coupled to the transport of aminophospholipids, phosphatidylserines (PS) and phosphatidylethanolamines (PE), from the outer to the inner leaflet of the plasma membrane. Does not show flippase activity toward phosphatidylcholine (PC). Contributes to the maintenance of membrane lipid asymmetry with a specific role in morphogenesis of muscle cells. In myoblasts, mediates PS enrichment at the inner leaflet of plasma membrane, triggering PIEZO1-dependent Ca2+ influx and Rho GTPases signal transduction, subsequently leading to the assembly of cortical actomyosin fibers and myotube formation. This chain is Phospholipid-transporting ATPase IH (Atp11a), found in Mus musculus (Mouse).